Reading from the N-terminus, the 237-residue chain is Protein ULTRAPETALA 1 (237 aa).

Residues glutamate 18–asparagine 116 enclose the SAND domain. The CW-type zinc finger occupies valine 133–serine 191.

In terms of assembly, interacts with HHO5. Associates with ATX1 for trimethylating 'Lys-4' on histone H3 (H3K4me3) at flower MADS box gene loci. In terms of tissue distribution, expressed at low levels in seedlings, roots, shoots, leaves, stems, inflorescences, pollen, flowers and siliques, with highest levels dividing tissues including inflorescence.

The protein localises to the cytoplasm. It is found in the nucleus. Functionally, putative transcription factor that acts as a key negative regulator of cell accumulation in shoot and floral meristems. Negatively regulates the size of the WUSCHEL (WUS)-expressing organizing center in inflorescence meristems. May act by down-regulating expression of WUS. Acts as an antirepressor that counteracts EMF1 action through modulation of trimethylated 'Lys-4' on histone H3 (H3K4me3) marks on target gene loci (including genes involved in salt stress response and flower development). Collaboratively with RBL and CYP40/SQN, influences floral meristem (FM) determinacy in an AGAMOUS and SUPERMAN-dependent manner, thus contributing to the floral developmental homeostasis. The chain is Protein ULTRAPETALA 1 from Arabidopsis thaliana (Mouse-ear cress).